A 322-amino-acid chain; its full sequence is Tetraacyldisaccharide 4'-kinase (322 aa).

Position 40–47 (40–47 (CVGGTGKT)) interacts with ATP.

Belongs to the LpxK family.

It catalyses the reaction a lipid A disaccharide + ATP = a lipid IVA + ADP + H(+). It functions in the pathway glycolipid biosynthesis; lipid IV(A) biosynthesis; lipid IV(A) from (3R)-3-hydroxytetradecanoyl-[acyl-carrier-protein] and UDP-N-acetyl-alpha-D-glucosamine: step 6/6. Functionally, transfers the gamma-phosphate of ATP to the 4'-position of a tetraacyldisaccharide 1-phosphate intermediate (termed DS-1-P) to form tetraacyldisaccharide 1,4'-bis-phosphate (lipid IVA). The sequence is that of Tetraacyldisaccharide 4'-kinase from Koribacter versatilis (strain Ellin345).